Consider the following 141-residue polypeptide: Cholinesterase (141 aa).

A glycan (N-linked (GlcNAc...) asparagine) is linked at Asn-39. 49-50 (GS) lines the substrate pocket. Ser-131 serves as the catalytic Acyl-ester intermediate. Ser-131 bears the Phosphoserine mark.

It belongs to the type-B carboxylesterase/lipase family. Homotetramer; disulfide-linked. Dimer of dimers. Present in most cells except erythrocytes.

It is found in the secreted. The enzyme catalyses an acylcholine + H2O = a carboxylate + choline + H(+). Esterase with broad substrate specificity. Contributes to the inactivation of the neurotransmitter acetylcholine. Can degrade neurotoxic organophosphate esters. The chain is Cholinesterase (BCHE) from Ovis aries (Sheep).